A 430-amino-acid polypeptide reads, in one-letter code: Gamma-glutamyl phosphate reductase (430 aa).

This sequence belongs to the gamma-glutamyl phosphate reductase family.

The protein localises to the cytoplasm. It carries out the reaction L-glutamate 5-semialdehyde + phosphate + NADP(+) = L-glutamyl 5-phosphate + NADPH + H(+). It functions in the pathway amino-acid biosynthesis; L-proline biosynthesis; L-glutamate 5-semialdehyde from L-glutamate: step 2/2. Catalyzes the NADPH-dependent reduction of L-glutamate 5-phosphate into L-glutamate 5-semialdehyde and phosphate. The product spontaneously undergoes cyclization to form 1-pyrroline-5-carboxylate. In Corynebacterium diphtheriae (strain ATCC 700971 / NCTC 13129 / Biotype gravis), this protein is Gamma-glutamyl phosphate reductase.